A 203-amino-acid chain; its full sequence is Glycerol-3-phosphate acyltransferase (203 aa).

The next 4 helical transmembrane spans lie at 7–27, 82–102, 118–138, and 141–161; these read TLLM…VLVC, AVSL…PVFF, APIG…LLLI, and YSSL…WWLD.

It belongs to the PlsY family. Probably interacts with PlsX.

The protein localises to the cell inner membrane. The enzyme catalyses an acyl phosphate + sn-glycerol 3-phosphate = a 1-acyl-sn-glycero-3-phosphate + phosphate. It participates in lipid metabolism; phospholipid metabolism. Catalyzes the transfer of an acyl group from acyl-phosphate (acyl-PO(4)) to glycerol-3-phosphate (G3P) to form lysophosphatidic acid (LPA). This enzyme utilizes acyl-phosphate as fatty acyl donor, but not acyl-CoA or acyl-ACP. The protein is Glycerol-3-phosphate acyltransferase of Shewanella baltica (strain OS223).